Consider the following 208-residue polypeptide: Ribosomal RNA large subunit methyltransferase E (208 aa).

S-adenosyl-L-methionine-binding residues include glycine 63, tryptophan 65, aspartate 83, aspartate 99, and aspartate 124. Lysine 164 functions as the Proton acceptor in the catalytic mechanism.

This sequence belongs to the class I-like SAM-binding methyltransferase superfamily. RNA methyltransferase RlmE family.

It is found in the cytoplasm. It catalyses the reaction uridine(2552) in 23S rRNA + S-adenosyl-L-methionine = 2'-O-methyluridine(2552) in 23S rRNA + S-adenosyl-L-homocysteine + H(+). Its function is as follows. Specifically methylates the uridine in position 2552 of 23S rRNA at the 2'-O position of the ribose in the fully assembled 50S ribosomal subunit. The chain is Ribosomal RNA large subunit methyltransferase E from Enterobacter sp. (strain 638).